The following is a 363-amino-acid chain: Spermidine/putrescine import ATP-binding protein PotA (363 aa).

The 231-residue stretch at 4–234 (LELRNVIRRF…PANRFIADFI (231 aa)) folds into the ABC transporter domain. 36-43 (GPSGCGKT) lines the ATP pocket.

This sequence belongs to the ABC transporter superfamily. Spermidine/putrescine importer (TC 3.A.1.11.1) family. As to quaternary structure, the complex is composed of two ATP-binding proteins (PotA), two transmembrane proteins (PotB and PotC) and a solute-binding protein (PotD).

The protein localises to the cell inner membrane. The enzyme catalyses ATP + H2O + polyamine-[polyamine-binding protein]Side 1 = ADP + phosphate + polyamineSide 2 + [polyamine-binding protein]Side 1.. In terms of biological role, part of the ABC transporter complex PotABCD involved in spermidine/putrescine import. Responsible for energy coupling to the transport system. This is Spermidine/putrescine import ATP-binding protein PotA from Nitrosomonas eutropha (strain DSM 101675 / C91 / Nm57).